We begin with the raw amino-acid sequence, 345 residues long: Methionine import ATP-binding protein MetN 2 (345 aa).

In terms of domain architecture, ABC transporter spans 4–243 (IELRHVKKEF…PQTEIAKRFI (240 aa)). 40 to 47 (GYSGAGKS) contributes to the ATP binding site.

Belongs to the ABC transporter superfamily. Methionine importer (TC 3.A.1.24) family. In terms of assembly, the complex is composed of two ATP-binding proteins (MetN), two transmembrane proteins (MetI) and a solute-binding protein (MetQ).

It localises to the cell membrane. The enzyme catalyses L-methionine(out) + ATP + H2O = L-methionine(in) + ADP + phosphate + H(+). The catalysed reaction is D-methionine(out) + ATP + H2O = D-methionine(in) + ADP + phosphate + H(+). Functionally, part of the ABC transporter complex MetNIQ involved in methionine import. Responsible for energy coupling to the transport system. The protein is Methionine import ATP-binding protein MetN 2 of Enterococcus faecalis (strain ATCC 700802 / V583).